A 388-amino-acid polypeptide reads, in one-letter code: Succinyl-diaminopimelate desuccinylase (388 aa).

A Zn(2+)-binding site is contributed by His-84. The active site involves Asp-86. Asp-115 lines the Zn(2+) pocket. Residue Glu-146 is the Proton acceptor of the active site. Zn(2+) contacts are provided by Glu-147, Glu-175, and His-360.

The protein belongs to the peptidase M20A family. DapE subfamily. As to quaternary structure, homodimer. Requires Zn(2+) as cofactor. The cofactor is Co(2+).

It catalyses the reaction N-succinyl-(2S,6S)-2,6-diaminopimelate + H2O = (2S,6S)-2,6-diaminopimelate + succinate. It functions in the pathway amino-acid biosynthesis; L-lysine biosynthesis via DAP pathway; LL-2,6-diaminopimelate from (S)-tetrahydrodipicolinate (succinylase route): step 3/3. Functionally, catalyzes the hydrolysis of N-succinyl-L,L-diaminopimelic acid (SDAP), forming succinate and LL-2,6-diaminopimelate (DAP), an intermediate involved in the bacterial biosynthesis of lysine and meso-diaminopimelic acid, an essential component of bacterial cell walls. In Helicobacter pylori (strain J99 / ATCC 700824) (Campylobacter pylori J99), this protein is Succinyl-diaminopimelate desuccinylase.